Here is a 505-residue protein sequence, read N- to C-terminus: Exoglucanase 1 (505 aa).

The signal sequence occupies residues 1–17; the sequence is MYRKLAVISAFLAAARA. Glutamine 18 carries the post-translational modification Pyrrolidone carboxylic acid. Residues 18 to 449 are catalytic; that stretch reads QQVCTQQAET…GSTGGNTGSN (432 aa). Disulfide bonds link cysteine 21–cysteine 88, cysteine 36–cysteine 41, cysteine 66–cysteine 87, and cysteine 77–cysteine 83. Residues asparagine 93 and asparagine 126 are each glycosylated (N-linked (GlcNAc...) asparagine). 6 cysteine pairs are disulfide-bonded: cysteine 151/cysteine 410, cysteine 185/cysteine 223, cysteine 189/cysteine 222, cysteine 243/cysteine 269, cysteine 251/cysteine 256, and cysteine 274/cysteine 344. Glutamate 225 serves as the catalytic Nucleophile. Catalysis depends on glutamate 230, which acts as the Proton donor/acceptor. 2 N-linked (GlcNAc...) asparagine glycosylation sites follow: asparagine 283 and asparagine 397. 2 disordered regions span residues 399–423 and 440–472; these read TASTPGAKRGSCSTSSGVPAQVEAQ and GSTGGNTGSNPPGTSTTRAPPSSTGSSPTATQT. The segment covering 409 to 423 has biased composition (polar residues); sequence SCSTSSGVPAQVEAQ. A compositionally biased stretch (low complexity) spans 447–470; that stretch reads GSNPPGTSTTRAPPSSTGSSPTAT. The linker stretch occupies residues 450–468; the sequence is PPGTSTTRAPPSSTGSSPT. In terms of domain architecture, CBM1 spans 469–505; that stretch reads ATQTHYGQCGGTGWTGPTRCASGYTCQVLNPFYSQCL.

This sequence belongs to the glycosyl hydrolase 7 (cellulase C) family. O-glycosylated. O-glycosylation of the cellulase linker provides protection from proteolysis. Linker glycans also contribute to binding affinity of cellobiohydrolases to cellulose.

It is found in the secreted. The catalysed reaction is Hydrolysis of (1-&gt;4)-beta-D-glucosidic linkages in cellulose and cellotetraose, releasing cellobiose from the non-reducing ends of the chains.. Functionally, exocellobiohydrolases (CBH) that catalyzes the hydrolysis of 1,4-beta-D-glucosidic bonds in cellulose to release the disaccharide cellobiose. The degradation of cellulose involves an interplay between different cellulolytic enzymes. Hydrolysis starts with endoglucanases (EGs), which cut internal beta-1,4-glucosidic bonds in cellulose to reduce the polymerization degree of the substrate and create new chain ends for exocellobiohydrolases (CBHs). The CBHs release the disaccharide cellobiose from the non-reducing end of the cellulose polymer chain. Finally, beta-1,4-glucosidases hydrolyze the cellobiose and other short cello-oligosaccharides into glucose units. This Trichoderma harzianum (Hypocrea lixii) protein is Exoglucanase 1 (cbh1).